The chain runs to 248 residues: mRNA-decapping protein OPG122 (248 aa).

The region spanning 45–227 (HKRVSVSAIL…IAKYALDTAK (183 aa)) is the Nudix hydrolase domain. The short motif at 126-147 (GIPKRGENVPECLSREIKEEVN) is the Nudix box element. A Mg(2+)-binding site is contributed by Glu-132. Glu-141 functions as the Nucleophile in the catalytic mechanism. A Mn(2+)-binding site is contributed by Glu-145. Position 167 (Asp-167) interacts with Mg(2+).

Belongs to the Nudix hydrolase family. It depends on Mg(2+) as a cofactor. The cofactor is Mn(2+).

It localises to the host mitochondrion. Decapping enzyme that remove the protective 5'-cap from both host and viral mRNAs to commit transcripts for decay by the cellular exonuclease XRN1. Preferentially targets spliced mRNAs and since all viral genes are intronless, it preferentially targets host over viral transcripts. Acceleration of the turnover of cellular transcripts promotes the shutoff of host protein synthesis and therefore diminish the magnitude of antiviral response. The polypeptide is mRNA-decapping protein OPG122 (OPG122) (Bos taurus (Bovine)).